The chain runs to 1403 residues: Centrosomal protein of 162 kDa (1403 aa).

The disordered stretch occupies residues lysine 18–lysine 42. Phosphoserine occurs at positions 157 and 160. The interval glutamine 170–glutamate 231 is disordered. A compositionally biased stretch (basic and acidic residues) spans threonine 208–glutamate 231. Phosphoserine occurs at positions 474 and 475. The segment at glutamate 476–serine 504 is disordered. Residues proline 487–proline 502 show a composition bias toward basic residues. Coiled coils occupy residues lysine 617 to tyrosine 670, valine 698 to asparagine 1121, glutamate 1171 to asparagine 1206, and cysteine 1235 to glutamine 1386.

It belongs to the CEP162 family. As to quaternary structure, interacts with CEP290. Interacts with CPNE4. Interacts with alpha-tubulin.

The protein localises to the cytoplasm. The protein resides in the cytoskeleton. It localises to the microtubule organizing center. Its subcellular location is the centrosome. It is found in the centriole. The protein localises to the spindle. The protein resides in the nucleus. Its function is as follows. Required to promote assembly of the transition zone in primary cilia. Acts by specifically recognizing and binding the axonemal microtubule. Localizes to the distal ends of centrioles before ciliogenesis and directly binds to axonemal microtubule, thereby promoting and restricting transition zone formation specifically at the cilia base. Required to mediate CEP290 association with microtubules. The sequence is that of Centrosomal protein of 162 kDa (CEP162) from Homo sapiens (Human).